The following is a 590-amino-acid chain: Transcription factor GTE7 (590 aa).

Positions 125–160 (LNNFTGEKNDLGPKKKKQKKNVSGLKRSNQFGPSDP) are disordered. The Bromo domain occupies 164 to 270 (KLLAGMLNTC…DHFDGMFNPA (107 aa)). 2 disordered regions span residues 282-400 (TGSS…KDPN) and 476-590 (RQGF…EAQC). The segment covering 288–298 (PEPDFKPDFKQ) has biased composition (basic and acidic residues). Pro residues predominate over residues 347-369 (PSPPPPPPVIQPELPQPQPPPPQ). One can recognise an NET domain in the interval 394–475 (PKAKDPNKRL…NYKKMASKIK (82 aa)). The span at 498–508 (SAEKRTRRGDA) shows a compositional bias: basic and acidic residues. A compositionally biased stretch (acidic residues) spans 509 to 521 (GEEDVDIGEDIPI). The segment covering 537–562 (AAAASSGSSSSGSSSSSGGSSSSSDS) has biased composition (low complexity).

The protein localises to the nucleus. The sequence is that of Transcription factor GTE7 (GTE7) from Arabidopsis thaliana (Mouse-ear cress).